The sequence spans 68 residues: MAFGDAWKQLSWFYYQYLLVTALYMLEPWERTIFNSLLISVAAMAVYTGYVFMPQHIMAILHYFEVVQ.

Residues 1 to 9 are Cytoplasmic-facing; that stretch reads MAFGDAWKQ. The helical transmembrane segment at 10–26 threads the bilayer; the sequence is LSWFYYQYLLVTALYML. Residues 27 to 31 lie on the Lumenal side of the membrane; sequence EPWER. A helical membrane pass occupies residues 32 to 54; it reads TIFNSLLISVAAMAVYTGYVFMP. Over 55 to 68 the chain is Cytoplasmic; the sequence is QHIMAILHYFEVVQ.

This sequence belongs to the SPTSS family. SPTSSA subfamily. As to quaternary structure, component of the serine palmitoyltransferase (SPT) complex, which is composed of SPTLC1, SPTLC2 or SPTLC3 and SPTSSA or SPTSSB. The heterodimer consisting of SPTLC1 and SPTLC2/SPTLC3 forms the catalytic core of the enzyme, while SPTSSA or SPTSSB subunits determine substrate specificity. SPT also interacts with ORMDL proteins, especially ORMDL3, which negatively regulate SPT activity in the presence of ceramides.

It localises to the endoplasmic reticulum membrane. Its pathway is lipid metabolism; sphingolipid metabolism. Functionally, component of the serine palmitoyltransferase multisubunit enzyme (SPT) that catalyzes the initial and rate-limiting step in sphingolipid biosynthesis by condensing L-serine and activated acyl-CoA (most commonly palmitoyl-CoA) to form long-chain bases. The SPT complex is composed of SPTLC1, SPTLC2 or SPTLC3 and SPTSSA or SPTSSB. Within this complex, the heterodimer consisting of SPTLC1 and SPTLC2/SPTLC3 forms the catalytic core. Within the SPT complex, SPTSSA stimulates the catalytic activity and plays a role in substrate specificity, which depends upon the overall complex composition. The SPTLC1-SPTLC2-SPTSSA complex shows a strong preference for C16-CoA substrate, while the SPTLC1-SPTLC3-SPTSSA isozyme uses both C14-CoA and C16-CoA as substrates, with a slight preference for C14-CoA. Independently of its action as a SPT component, may be involved in MBOAT7 localization to mitochondria-associated membranes, a membrane bridge between the endoplasmic reticulum and mitochondria, may hence affect MBOAT7-catalyzed incorporation of arachidonic acid into phosphatidylinositol. This Danio rerio (Zebrafish) protein is Serine palmitoyltransferase small subunit A (sptssa).